Reading from the N-terminus, the 542-residue chain is CTP synthase (542 aa).

Residues 1–265 (MARYVFITGG…DSEVLSAFGI (265 aa)) are amidoligase domain. A CTP-binding site is contributed by Ser13. Position 13 (Ser13) interacts with UTP. Position 14 to 19 (14 to 19 (SLGKGI)) interacts with ATP. Tyr54 is an L-glutamine binding site. Asp71 lines the ATP pocket. Mg(2+) contacts are provided by Asp71 and Glu139. CTP is bound by residues 146–148 (DIE), 186–191 (KTKPTQ), and Lys222. Residues 186-191 (KTKPTQ) and Lys222 each bind UTP. The Glutamine amidotransferase type-1 domain maps to 291 to 541 (TIAVVGKYTG…IEAAIEQSRL (251 aa)). Gly353 provides a ligand contact to L-glutamine. The active-site Nucleophile; for glutamine hydrolysis is the Cys380. L-glutamine-binding positions include 381-384 (FGMQ), Glu404, and Arg469. Active-site residues include His514 and Glu516.

It belongs to the CTP synthase family. In terms of assembly, homotetramer.

It catalyses the reaction UTP + L-glutamine + ATP + H2O = CTP + L-glutamate + ADP + phosphate + 2 H(+). The enzyme catalyses L-glutamine + H2O = L-glutamate + NH4(+). It carries out the reaction UTP + NH4(+) + ATP = CTP + ADP + phosphate + 2 H(+). It participates in pyrimidine metabolism; CTP biosynthesis via de novo pathway; CTP from UDP: step 2/2. Its activity is regulated as follows. Allosterically activated by GTP, when glutamine is the substrate; GTP has no effect on the reaction when ammonia is the substrate. The allosteric effector GTP functions by stabilizing the protein conformation that binds the tetrahedral intermediate(s) formed during glutamine hydrolysis. Inhibited by the product CTP, via allosteric rather than competitive inhibition. Functionally, catalyzes the ATP-dependent amination of UTP to CTP with either L-glutamine or ammonia as the source of nitrogen. Regulates intracellular CTP levels through interactions with the four ribonucleotide triphosphates. This Brucella melitensis biotype 2 (strain ATCC 23457) protein is CTP synthase.